A 678-amino-acid polypeptide reads, in one-letter code: ERAD-associated E3 ubiquitin-protein ligase component HRD3A (678 aa).

The N-terminal stretch at 1 to 25 is a signal peptide; that stretch reads MRILSYGIVILSLLVFSFIEFGVHA. Residues 40–71 are disordered; it reads GGDDNGVGESSDFDEFGESEPKSEEELDPGSW. Sel1-like repeat units follow at residues 124–159, 242–277, 279–313, 317–349, 353–386, 388–422, 506–537, and 540–568; these read PHAQSIMGFVYGIGMMREKSKSKSFLHHNFAAAGGN, ANAMYKIGLFYYFGLRGLRRDHTKALHWFLKAVDKG, PRSMELLGEIYARGAGVERNYTKALEWLTLAAKEG, AFNGIGYLYVKGYGVDKKNYTKAREYFEKAVDN, SGHYNLGVLYLKGIGVNRDVRQATKYFFVAANAG, PKAFYQLAKMFHTGVGLKKNLEMATSFYKLVAERG, AALLIGDAYYYGRGTERDFVRAAEAYMHAKSQ, and AQAMFNLGYMHEHGQGLPFDLHLAKRYYD. Residues asparagine 298 and asparagine 335 are each glycosylated (N-linked (GlcNAc...) asparagine). A helical transmembrane segment spans residues 620-640; the sequence is VVFEEGNATILTLFVCLITIL.

It belongs to the sel-1 family. Interacts with OS9.

Its subcellular location is the endoplasmic reticulum membrane. In terms of biological role, component of the endoplasmic reticulum (ER) quality control system called ER-associated degradation (ERAD) and involved in ubiquitin-dependent degradation of misfolded endoplasmic reticulum proteins. Functions as an ERAD substrate-recruiting factor that recognizes misfolded proteins for the HRD1 E3 ubiquitin ligase complex. Targets the misfolded LRR receptor kinase BRI1. This Arabidopsis thaliana (Mouse-ear cress) protein is ERAD-associated E3 ubiquitin-protein ligase component HRD3A.